The chain runs to 272 residues: RELT-like protein 1 (272 aa).

The N-terminal stretch at 1–23 (MALWGLPGSAVLAASVFVGGAVS) is a signal peptide. Residues 24–58 (SPLVAADNTGSHTLHSRAETTPSSPTNNPGNGHPE) are Extracellular-facing. The tract at residues 33-52 (GSHTLHSRAETTPSSPTNNP) is disordered. The chain crosses the membrane as a helical span at residues 59-79 (YIAYVLVPVFFVMGLLGVLIC). Residues 80–272 (HLLKKKGYRC…PVKRERSDTE (193 aa)) lie on the Cytoplasmic side of the membrane. The stretch at 90–114 (TTEAEQEVEEEKVEKIELNDSINEN) forms a coiled coil. 2 positions are modified to phosphoserine: S110 and S115. Disordered regions lie at residues 146–171 (DIESPVTPSTPGSPPVSPGPLSPGAT) and 235–272 (EHKSNQKERRSLMSVSGIESVNGDVPATPVKRERSDTE). Positions 156–166 (PGSPPVSPGPL) are enriched in pro residues. Residues 235–245 (EHKSNQKERRS) are compositionally biased toward basic and acidic residues. A phosphoserine mark is found at S245 and S248.

It belongs to the RELT family. Interacts with RELT, RELL2, OXSR1 and PLSCR1.

It is found in the cell membrane. Induces activation of MAPK14/p38 cascade, when overexpressed. Induces apoptosis, when overexpressed. This is RELT-like protein 1 (Rell1) from Mus musculus (Mouse).